The chain runs to 172 residues: Adenine phosphoribosyltransferase (172 aa).

The protein belongs to the purine/pyrimidine phosphoribosyltransferase family. As to quaternary structure, homodimer.

Its subcellular location is the cytoplasm. It catalyses the reaction AMP + diphosphate = 5-phospho-alpha-D-ribose 1-diphosphate + adenine. The protein operates within purine metabolism; AMP biosynthesis via salvage pathway; AMP from adenine: step 1/1. Catalyzes a salvage reaction resulting in the formation of AMP, that is energically less costly than de novo synthesis. In Picosynechococcus sp. (strain ATCC 27264 / PCC 7002 / PR-6) (Agmenellum quadruplicatum), this protein is Adenine phosphoribosyltransferase.